The following is an 853-amino-acid chain: Protein translocase subunit SecA 1 (853 aa).

ATP contacts are provided by residues Gln85, 103–107 (GEGKT), and Asp492.

It belongs to the SecA family. Monomer and homodimer. Part of the essential Sec protein translocation apparatus which comprises SecA, SecYEG and auxiliary proteins SecDF. Other proteins may also be involved.

The protein resides in the cell membrane. Its subcellular location is the cytoplasm. The enzyme catalyses ATP + H2O + cellular proteinSide 1 = ADP + phosphate + cellular proteinSide 2.. Part of the Sec protein translocase complex. Interacts with the SecYEG preprotein conducting channel. Has a central role in coupling the hydrolysis of ATP to the transfer of proteins into and across the cell membrane, serving as an ATP-driven molecular motor driving the stepwise translocation of polypeptide chains across the membrane. This is Protein translocase subunit SecA 1 from Corynebacterium diphtheriae (strain ATCC 700971 / NCTC 13129 / Biotype gravis).